A 459-amino-acid polypeptide reads, in one-letter code: NADH-ubiquinone oxidoreductase chain 4 (459 aa).

Transmembrane regions (helical) follow at residues 22-42 (HLSY…LQWL), 61-81 (PIST…ILVS), 94-113 (RTFT…AFSA), 114-134 (LEMM…LIII), 146-166 (AGTY…IALT), 197-217 (WFAL…HLWL), 225-245 (PIAG…YGII), 258-278 (LSYP…LICL), 285-304 (SLIA…AALL), 308-330 (LSIT…LFCL), 352-372 (LLPL…ALPP), 380-400 (LTII…TGLG), and 437-457 (LIMM…QLMT).

It belongs to the complex I subunit 4 family.

It localises to the mitochondrion membrane. The enzyme catalyses a ubiquinone + NADH + 5 H(+)(in) = a ubiquinol + NAD(+) + 4 H(+)(out). In terms of biological role, core subunit of the mitochondrial membrane respiratory chain NADH dehydrogenase (Complex I) that is believed to belong to the minimal assembly required for catalysis. Complex I functions in the transfer of electrons from NADH to the respiratory chain. The immediate electron acceptor for the enzyme is believed to be ubiquinone. In Pelomedusa subrufa (African side-necked turtle), this protein is NADH-ubiquinone oxidoreductase chain 4 (MT-ND4).